The following is a 319-amino-acid chain: Aspartate carbamoyltransferase catalytic subunit (319 aa).

2 residues coordinate carbamoyl phosphate: Arg65 and Thr66. Lys93 provides a ligand contact to L-aspartate. The carbamoyl phosphate site is built by Arg115, His149, and Gln152. L-aspartate is bound by residues Arg182 and Arg237. Carbamoyl phosphate contacts are provided by Gly278 and Pro279.

Belongs to the aspartate/ornithine carbamoyltransferase superfamily. ATCase family. In terms of assembly, heterododecamer (2C3:3R2) of six catalytic PyrB chains organized as two trimers (C3), and six regulatory PyrI chains organized as three dimers (R2).

The catalysed reaction is carbamoyl phosphate + L-aspartate = N-carbamoyl-L-aspartate + phosphate + H(+). It functions in the pathway pyrimidine metabolism; UMP biosynthesis via de novo pathway; (S)-dihydroorotate from bicarbonate: step 2/3. Its function is as follows. Catalyzes the condensation of carbamoyl phosphate and aspartate to form carbamoyl aspartate and inorganic phosphate, the committed step in the de novo pyrimidine nucleotide biosynthesis pathway. The protein is Aspartate carbamoyltransferase catalytic subunit of Janthinobacterium sp. (strain Marseille) (Minibacterium massiliensis).